The following is a 70-amino-acid chain: Brevinin-1S (70 aa).

Residues 1 to 22 (MFTLKKSLLLLFFLGTINLSLC) form the signal peptide. The propeptide occupies 23–44 (EEERNAEEERRDDPEERDVEVE). Cysteine 64 and cysteine 70 are joined by a disulfide.

It belongs to the frog skin active peptide (FSAP) family. Brevinin subfamily. Expressed by the skin glands.

Its subcellular location is the secreted. Antimicrobial peptide. This is Brevinin-1S from Odorrana schmackeri (Schmacker's frog).